The chain runs to 448 residues: Solute carrier family 52, riboflavin transporter, member 1 (448 aa).

A run of 5 helical transmembrane segments spans residues 14-34 (LLVA…WVEL), 47-67 (LPSY…VVTL), 79-99 (VPIQ…APLW), 124-144 (ACCT…PPFL), and 147-167 (FFLG…VQGV). Asn178 carries N-linked (GlcNAc...) asparagine glycosylation. The chain crosses the membrane as a helical span at residues 191–211 (FPASTFFWALTALLVTSAAAF). The segment at 225 to 267 (TTGGSGPELQLGSPGAEEEEKEEEEALPLQEPPSQAAGTIPGP) is disordered. Residues 240–250 (AEEEEKEEEEA) are compositionally biased toward acidic residues. The next 5 helical transmembrane spans lie at 280-300 (AFLL…LPSV), 315-335 (LAVV…MGVL), 342-362 (LVGL…LAIL), 369-389 (VGTT…LCVF), and 407-427 (ALLA…GAMF).

This sequence belongs to the riboflavin transporter family. As to expression, widely expressed. Highly expressed in the testis, placenta and small intestine. Expressed at lower level in other tissues.

It is found in the cell membrane. The enzyme catalyses riboflavin(in) = riboflavin(out). Its activity is regulated as follows. The activity is strongly inhibited by riboflavin analogs, such as lumiflavin. Weakly inhibited by flavin adenine dinucleotide (FAD). Its function is as follows. Plasma membrane transporter mediating the uptake by cells of the water soluble vitamin B2/riboflavin that plays a key role in biochemical oxidation-reduction reactions of the carbohydrate, lipid, and amino acid metabolism. Humans are unable to synthesize vitamin B2/riboflavin and must obtain it via intestinal absorption. (Microbial infection) May function as a cell receptor to retroviral envelopes similar to the porcine endogenous retrovirus (PERV-A). This chain is Solute carrier family 52, riboflavin transporter, member 1, found in Homo sapiens (Human).